The chain runs to 217 residues: MILNILLTLTLLMGRVKSDPDPLQDYCVSPPPSSHQQIFLNGKLCKDPTQASVSDFSTSALSRPGNTKTKPFMINVTVTTTANLPGLNTVGLTMARLDFGGSGVVPPHVHPRASEVTVCLDGVLLVGFVDTSGRVFTQELHPGETFVFPKGLIHFLYNIDTVSSALAVSGLSSQNPGTQIVSLSSFISKPPFLVEVLKSAYDINGQDVARIRKSLEG.

A signal peptide spans 1–18 (MILNILLTLTLLMGRVKS). Residues Cys-27 and Cys-45 are joined by a disulfide bond. Residues 59 to 209 (SALSRPGNTK…AYDINGQDVA (151 aa)) form the Cupin type-1 domain. N-linked (GlcNAc...) asparagine glycosylation is present at Asn-75. Mn(2+) contacts are provided by His-108, His-110, Glu-115, and His-154.

The protein belongs to the germin family. Oligomer (believed to be a pentamer but probably hexamer).

It is found in the secreted. The protein resides in the extracellular space. Its subcellular location is the apoplast. Functionally, may play a role in plant defense. Probably has no oxalate oxidase activity even if the active site is conserved. This is Germin-like protein subfamily 1 member 1 (GLP7) from Arabidopsis thaliana (Mouse-ear cress).